A 631-amino-acid chain; its full sequence is Phosphomethylpyrimidine synthase (631 aa).

Substrate-binding positions include N239, M268, Y297, H333, 353 to 355 (SRG), 394 to 397 (DGLR), and E433. A Zn(2+)-binding site is contributed by H437. Y460 is a binding site for substrate. H501 contributes to the Zn(2+) binding site. The [4Fe-4S] cluster site is built by C581, C584, and C589.

Belongs to the ThiC family. Homodimer. Requires [4Fe-4S] cluster as cofactor.

The enzyme catalyses 5-amino-1-(5-phospho-beta-D-ribosyl)imidazole + S-adenosyl-L-methionine = 4-amino-2-methyl-5-(phosphooxymethyl)pyrimidine + CO + 5'-deoxyadenosine + formate + L-methionine + 3 H(+). Its pathway is cofactor biosynthesis; thiamine diphosphate biosynthesis. In terms of biological role, catalyzes the synthesis of the hydroxymethylpyrimidine phosphate (HMP-P) moiety of thiamine from aminoimidazole ribotide (AIR) in a radical S-adenosyl-L-methionine (SAM)-dependent reaction. The chain is Phosphomethylpyrimidine synthase from Salmonella gallinarum (strain 287/91 / NCTC 13346).